The sequence spans 57 residues: uncharacterized protein (57 aa).

The chain crosses the membrane as a helical span at residues 10 to 27 (FGLLWLIIGSEAFHLNAL). Positions 28–55 (KQDHLERMKQYDAKIRLAKHEFDDTSNE) form a coiled coil.

The protein resides in the membrane. This is an uncharacterized protein from Schizosaccharomyces pombe (strain 972 / ATCC 24843) (Fission yeast).